The chain runs to 163 residues: Protein-export protein SecB (163 aa).

Belongs to the SecB family. Homotetramer, a dimer of dimers. One homotetramer interacts with 1 SecA dimer.

Its subcellular location is the cytoplasm. Functionally, one of the proteins required for the normal export of preproteins out of the cell cytoplasm. It is a molecular chaperone that binds to a subset of precursor proteins, maintaining them in a translocation-competent state. It also specifically binds to its receptor SecA. In Brucella abortus (strain S19), this protein is Protein-export protein SecB.